Here is a 634-residue protein sequence, read N- to C-terminus: Probable potassium transport system protein Kup (634 aa).

Helical transmembrane passes span 21–41, 58–78, 110–130, 152–172, 179–199, 223–243, 258–278, 296–316, 348–368, 377–397, 403–423, and 427–447; these read LVIGAIGVVFGDIGTSPLYTL, VLGILSLVFWALMLVVTLKYV, MYVVGILGIFGASLFFGDGVI, PFVVPITLVVLGMLFLAQRFG, AFGPITLLWFFALGAIGVYNM, WHAVFVLGAVVLAVTGGEALY, WQFVVLPMLTLTYLGQGALML, ALYPMIVLATAATVIASQALI, IYVPAVNWCLLALVAVAVIGF, AYGVSVTGTMLITTVLMIIYA, VPAPLLWLFALVFLAVDCAFF, and IIKFLDGAWFPLLLGLILFTL.

This sequence belongs to the HAK/KUP transporter (TC 2.A.72) family.

Its subcellular location is the cell inner membrane. It catalyses the reaction K(+)(in) + H(+)(in) = K(+)(out) + H(+)(out). Its function is as follows. Transport of potassium into the cell. Likely operates as a K(+):H(+) symporter. The sequence is that of Probable potassium transport system protein Kup from Xanthomonas euvesicatoria pv. vesicatoria (strain 85-10) (Xanthomonas campestris pv. vesicatoria).